The following is a 942-amino-acid chain: Nuclear receptor coactivator 7 (942 aa).

Methionine 1 bears the N-acetylmethionine mark. The segment covering 1–12 (MDTKEEKKERKQ) has biased composition (basic and acidic residues). Residues 1–46 (MDTKEEKKERKQSYFARLKKKKQAKQNAETASAVATRTHTGKEDNN) form a disordered region. Residues 4-29 (KEEKKERKQSYFARLKKKKQAKQNAE) are a coiled coil. Residues 25–38 (KQNAETASAVATRT) show a composition bias toward polar residues. Position 89 is a phosphoserine (serine 89). Residues 114–157 (MEYTAGNQDTLNSIALKFNITPNKLVELNKLFTHTIVPGQVLFV) form the LysM domain. Threonine 134 is modified (phosphothreonine). The interval 161–188 (NSPSSTLRLSSSSPGATVSPSSSDAEYD) is disordered. A compositionally biased stretch (low complexity) spans 162–183 (SPSSTLRLSSSSPGATVSPSSS). 5 positions are modified to phosphoserine: serine 179, serine 183, serine 208, serine 209, and serine 211. The segment at 324-416 (KFKSINKEKR…ENFLGEDDDF (93 aa)) is disordered. The span at 356 to 368 (GHTPTKPSGSSVS) shows a compositional bias: polar residues. Residues 369-381 (EKLKKLDSSRETS) are compositionally biased toward basic and acidic residues. Residues serine 441, serine 500, and serine 502 each carry the phosphoserine modification. The 162-residue stretch at 781–942 (ALLENMHIEQ…VQDLEVWAFD (162 aa)) folds into the TLDc domain.

Belongs to the OXR1 family. In terms of assembly, interacts with ESR1, ESR2A, ESR2B, THRB, PPARG and RARA in a ligand-inducible manner. Interacts with the heterodimer AHR-ARNT. As to expression, highly expressed in brain. Weakly expressed in mammary gland, ovary, uterus, prostate, stomach, bladder, spinal cord and pancreas. Expressed in cancer cell line.

It is found in the nucleus. Functionally, enhances the transcriptional activities of several nuclear receptors. Involved in the coactivation of different nuclear receptors, such as ESR1, THRB, PPARG and RARA. The protein is Nuclear receptor coactivator 7 (NCOA7) of Homo sapiens (Human).